Reading from the N-terminus, the 202-residue chain is GTP cyclohydrolase-2 (202 aa).

A GTP-binding site is contributed by 48-52 (RLHSE). Positions 53, 64, and 66 each coordinate Zn(2+). GTP is bound by residues Gln69, 91-93 (EGR), and Thr113. Asp125 acts as the Proton acceptor in catalysis. The Nucleophile role is filled by Arg127. GTP contacts are provided by Thr148 and Lys153.

This sequence belongs to the GTP cyclohydrolase II family. Requires Zn(2+) as cofactor.

It carries out the reaction GTP + 4 H2O = 2,5-diamino-6-hydroxy-4-(5-phosphoribosylamino)-pyrimidine + formate + 2 phosphate + 3 H(+). The protein operates within cofactor biosynthesis; riboflavin biosynthesis; 5-amino-6-(D-ribitylamino)uracil from GTP: step 1/4. Functionally, catalyzes the conversion of GTP to 2,5-diamino-6-ribosylamino-4(3H)-pyrimidinone 5'-phosphate (DARP), formate and pyrophosphate. In Colwellia psychrerythraea (strain 34H / ATCC BAA-681) (Vibrio psychroerythus), this protein is GTP cyclohydrolase-2.